Here is a 1418-residue protein sequence, read N- to C-terminus: ABC transporter G family member 38 (1418 aa).

A disordered region spans residues 1-27 (MAHYRVSSEVENIMNRDRSHRKNEEED). The 273-residue stretch at 147–419 (TKIRVLPDRK…FEFMGFKCPE (273 aa)) folds into the ABC transporter 1 domain. 179–186 (GPPGSGKS) provides a ligand contact to ATP. The region spanning 497-710 (ELLKACLERE…IQTAVSVNEF (214 aa)) is the ABC transmembrane type-2 1 domain. Transmembrane regions (helical) follow at residues 516 to 536 (TFVL…VVFW), 548 to 568 (GIIY…SGFF), 600 to 620 (IITF…TYFT), 634 to 654 (YLVL…IAAV), 659 to 679 (VVSN…SGYV), and 729 to 749 (FFVE…STIL). One can recognise an ABC transporter 2 domain in the interval 821–1073 (MTFENITYSV…QLIEYFEGIR (253 aa)). ATP is bound at residue 866 to 873 (GVSGAGKT). The 215-residue stretch at 1146–1360 (SQFQACLWKQ…GLYGLTIAQY (215 aa)) folds into the ABC transmembrane type-2 2 domain. The next 7 helical transmembrane spans lie at 1167–1187 (AVRF…FWSL), 1197–1217 (IFNS…QSAA), 1249–1269 (VIIE…IVYG), 1284–1304 (IFFT…VISV), 1310–1330 (IASI…GFTI), 1341–1361 (WFTY…AQYG), and 1387–1407 (FLWV…FIYA).

This sequence belongs to the ABC transporter superfamily. ABCG family. PDR (TC 3.A.1.205) subfamily. As to expression, expressed in roots and siliques at low levels.

The protein resides in the membrane. May be a general defense protein. This Arabidopsis thaliana (Mouse-ear cress) protein is ABC transporter G family member 38 (ABCG38).